The following is a 130-amino-acid chain: Protein ApaG (130 aa).

Residues 3–127 (RAVTRQIEVL…FSLDSPDIRR (125 aa)) form the ApaG domain.

This chain is Protein ApaG, found in Afipia carboxidovorans (strain ATCC 49405 / DSM 1227 / KCTC 32145 / OM5) (Oligotropha carboxidovorans).